Here is a 567-residue protein sequence, read N- to C-terminus: Interleukin-1 receptor-like 1 (567 aa).

The N-terminal stretch at 1-26 (MIDRQRMGLWALAILTLPMYLTVTEG) is a signal peptide. 2 Ig-like C2-type domains span residues 27–109 (SKSS…LNVT) and 120–203 (PDYL…VTAT). The Extracellular segment spans residues 27 to 332 (SKSSWGLENE…LRRKQPIDHR (306 aa)). A disulfide bond links Cys42 and Cys93. N-linked (GlcNAc...) asparagine glycosylation is found at Asn60, Asn101, Asn107, Asn146, Asn176, and Asn194. 2 disulfide bridges follow: Cys117/Cys157 and Cys139/Cys187. The segment at 204-216 (RSFTVEEKGFSMF) is flexible linker. The region spanning 217–324 (PVITNPPYNH…GMIRHTIRLR (108 aa)) is the Ig-like C2-type 3 domain. N-linked (GlcNAc...) asparagine glycosylation is found at Asn225, Asn259, and Asn278. Intrachain disulfides connect Cys240/Cys308 and Cys243/Cys287. A Glycyl lysine isopeptide (Lys-Gly) (interchain with G-Cter in ubiquitin) cross-link involves residue Lys326. The helical transmembrane segment at 333-355 (SIYYIVAGCSLLLMFINVLVIVL) threads the bilayer. The Cytoplasmic segment spans residues 356-567 (KVFWIEVALF…GKACLDLKHF (212 aa)). Positions 380 to 540 (KLYDAYIIYP…KFWKHVRYQM (161 aa)) constitute a TIR domain. The residue at position 442 (Ser442) is a Phosphoserine; by GSK3-beta. Residue Glu466 is part of the active site.

Belongs to the interleukin-1 receptor family. As to quaternary structure, interacts with MYD88, IRAK1, IRAK4, and TRAF6. Bound to its ligand IL33, interacts with IL1RAP to form the minimal interleukin-33 signaling complex with a 1:1:1 stoichiometry. Interacts with KIT (bound to KITLG/SCF). A mast cell-specific KITLG/SCF-induced interleukin-33 signaling complex contains IL1RL1, IL1RAP, KIT and MYD88. Interacts with TMED1. In terms of processing, phosphorylated by GSK3B at Ser-442; leading to proteasomal degradation. Post-translationally, ubiquitinated at Lys-326 in a FBXL19-mediated manner; leading to proteasomal degradation. Ubiquitination by TRAF6 via 'Lys-27'-linked polyubiquitination and deubiquitination by USP38 serves as a critical regulatory mechanism for fine-tuning IL1RL1-mediated inflammatory response. In terms of tissue distribution, predominantly expressed in hematopoietic tissues, and in macrophage, erythroid, epithelial and fibroblast cell lines. Isoform A is expressed in brain astrocytes and microglia. Isoform B is expressed in brain endothelial cells.

The protein localises to the cell membrane. Its subcellular location is the secreted. It carries out the reaction NAD(+) + H2O = ADP-D-ribose + nicotinamide + H(+). Receptor for interleukin-33 (IL-33) which plays crucial roles in innate and adaptive immunity, contributing to tissue homeostasis and responses to environmental stresses together with coreceptor IL1RAP. Its stimulation recruits MYD88, IRAK1, IRAK4, and TRAF6, followed by phosphorylation of MAPK3/ERK1 and/or MAPK1/ERK2, MAPK14, and MAPK8. Possibly involved in helper T-cell function. Upon tissue injury, induces UCP2-dependent mitochondrial rewiring that attenuates the generation of reactive oxygen species and preserves the integrity of Krebs cycle required for persistent production of itaconate and subsequent GATA3-dependent differentiation of inflammation-resolving alternatively activated macrophages. Its function is as follows. Inhibits IL-33 signaling. This Mus musculus (Mouse) protein is Interleukin-1 receptor-like 1 (Il1rl1).